A 321-amino-acid polypeptide reads, in one-letter code: Pectinesterase (321 aa).

At threonine 1 the chain carries N-acetylthreonine. Residue asparagine 75 is glycosylated (N-linked (GlcNAc...) (complex) asparagine). The substrate site is built by threonine 84 and glutamine 114. Catalysis depends on aspartate 137, which acts as the Proton donor. An intrachain disulfide couples cysteine 151 to cysteine 171. The Nucleophile role is filled by aspartate 158. Arginine 226 and tryptophan 228 together coordinate substrate. N-linked (GlcNAc...) (complex) asparagine glycans are attached at residues asparagine 275, asparagine 290, and asparagine 319.

The protein belongs to the pectinesterase family. Post-translationally, the N-glycans attached at Asn-75, Asn-275, Asn-290 and Asn-319 are complex oligosaccharides containing xylose, fucose, hexose and N-acetylglucosamine.

It carries out the reaction [(1-&gt;4)-alpha-D-galacturonosyl methyl ester](n) + n H2O = [(1-&gt;4)-alpha-D-galacturonosyl](n) + n methanol + n H(+). It functions in the pathway glycan metabolism; pectin degradation; 2-dehydro-3-deoxy-D-gluconate from pectin: step 1/5. Its activity is regulated as follows. Inhibited by PMEI. This Actinidia deliciosa (Kiwi) protein is Pectinesterase.